Consider the following 619-residue polypeptide: tRNA (guanine(37)-N(1))-methyltransferase 2 (619 aa).

A mitochondrion-targeting transit peptide spans 1–10 (MVSKLSLFRA). S-adenosyl-L-methionine is bound by residues arginine 434, 472–473 (DL), 500–501 (DG), and asparagine 523.

Belongs to the class I-like SAM-binding methyltransferase superfamily. TRM5/TYW2 family. In terms of assembly, monomer.

It is found in the mitochondrion matrix. The protein resides in the nucleus. The protein localises to the cytoplasm. The catalysed reaction is guanosine(37) in tRNA + S-adenosyl-L-methionine = N(1)-methylguanosine(37) in tRNA + S-adenosyl-L-homocysteine + H(+). Functionally, specifically methylates the N1 position of guanosine-37 in various cytoplasmic and mitochondrial tRNAs. Methylation is not dependent on the nature of the nucleoside 5' of the target nucleoside. This is the first step in the biosynthesis of wybutosine (yW), a modified base adjacent to the anticodon of tRNAs and required for accurate decoding. In Arabidopsis thaliana (Mouse-ear cress), this protein is tRNA (guanine(37)-N(1))-methyltransferase 2.